Reading from the N-terminus, the 379-residue chain is MATAGKVIKCRAAVTWEAGKPLSIEEVEVAPPQAMEVRIKILYTALCHTDVYFWEAKGQTPVFPRILGHEAGGIVESVGEGVTDVAPGDHVLPVFTGECKECAHCKSEESNMCDLLRINVDRGVMIGDGKSRFTISGQPIFHFVGTSTFSEYTVIHVGCLAKINPEAPLDKVCILSCGISTGLGATLNVAKPAKGSTVAIFGLGAVGLAAMEGARLAGASRIIGVDINPAKYEQAKKFGCTEFVNPKDHDKPVQEVLIELTNGGVDRSVECTGNVNAMISAFECVHDGWGVAVLVGVPHKDDQFKTHPMNFLSEKTLKGTFFGNYKPRTDLPNVVEMYMKKELELEKFITHSVPFSEINTAFDLMLKGESLRCIMRMED.

Zn(2+)-binding residues include Cys-47, Thr-49, His-69, Cys-99, Cys-102, Cys-105, Cys-113, and Cys-177. An alcohol contacts are provided by Thr-49 and His-69. Thr-49 serves as a coordination point for NAD(+). NAD(+) is bound by residues 202-207 (GLGAVG), Asp-226, Lys-231, Thr-272, Val-295, 295-297 (VGV), Phe-322, and Arg-372.

The protein belongs to the zinc-containing alcohol dehydrogenase family. As to quaternary structure, homodimer. The cofactor is Zn(2+).

The protein localises to the cytoplasm. The catalysed reaction is a primary alcohol + NAD(+) = an aldehyde + NADH + H(+). It catalyses the reaction a secondary alcohol + NAD(+) = a ketone + NADH + H(+). This chain is Alcohol dehydrogenase 2 (ADH2), found in Zea mays (Maize).